The following is a 134-amino-acid chain: Methylmalonyl-CoA decarboxylase subunit gamma (134 aa).

Residues Ala28–Ala38 show a composition bias toward low complexity. The disordered stretch occupies residues Ala28–Thr67. Residues Pro39–Ala53 are compositionally biased toward pro residues. The segment covering Pro54–Thr67 has biased composition (low complexity). A Biotinyl-binding domain is found at Ala58–Ser134. An N6-biotinyllysine modification is found at Lys100.

The methylmalonyl-CoA decarboxylase is composed of four subunits: the carboxyltransferase alpha subunit (MmdA), the tunnel beta subunit (MmdB), the biotin-containing gamma subunit (MmdC) and the delta subunit (MmdD). The cofactor is biotin.

Its subcellular location is the cell membrane. The catalysed reaction is (S)-methylmalonyl-CoA + Na(+)(in) + H(+)(out) = propanoyl-CoA + Na(+)(out) + CO2. Its function is as follows. Biotin-containing subunit of the sodium ion pump methylmalonyl-CoA decarboxylase, which converts the chemical energy of a decarboxylation reaction into an electrochemical gradient of Na(+) ions across the cytoplasmic membrane, thereby creating a sodium ion motive force that is used for ATP synthesis. This chain is Methylmalonyl-CoA decarboxylase subunit gamma, found in Propionigenium modestum.